A 661-amino-acid polypeptide reads, in one-letter code: MPANEDAPQPGEHGSACEVSVSFEDVTVDFSREEWQQLDSTQRRLYQDVMLENYSHLLSVGFEVPKPEVIFKLEQGEGPWTLEGEAPHQSCSDGKFGIKPSQRRISGKSTFHSEMEGEDTRDDSLYSILEELWQDAEQIKRCQEKHNKLLSRTTFLNKKILNTEWDYEYKDFGKFVHPSPNLILSQKRPHKRDSFGKSFKHNLDLHIHNKSNAAKNLDKTIGHGQVFTQNSSYSHHENTHTGVKFCERNQCGKVLSLKHSLSQNVKFPIGEKANTCTEFGKIFTQRSHFFAPQKIHTVEKPHELSKCVNVFTQKPLLSIYLRVHRDEKLYICTKCGKAFIQNSELIMHEKTHTREKPYKCNECGKSFFQVSSLLRHQTTHTGEKLFECSECGKGFSLNSALNIHQKIHTGERHHKCSECGKAFTQKSTLRMHQRIHTGERSYICTQCGQAFIQKAHLIAHQRIHTGEKPYECSDCGKSFPSKSQLQMHKRIHTGEKPYICTECGKAFTNRSNLNTHQKSHTGEKSYICAECGKAFTDRSNFNKHQTIHTGEKPYVCADCGRAFIQKSELITHQRIHTTEKPYKCPDCEKSFSKKPHLKVHQRIHTGEKPYICAECGKAFTDRSNFNKHQTIHTGDKPYKCSDCGKGFTQKSVLSMHRNIHT.

Residues 21-92 (VSFEDVTVDF…EGEAPHQSCS (72 aa)) form the KRAB domain. Residue K266 forms a Glycyl lysine isopeptide (Lys-Gly) (interchain with G-Cter in SUMO2) linkage. 12 C2H2-type zinc fingers span residues 330-352 (YICTKCGKAFIQNSELIMHEKTH), 358-380 (YKCNECGKSFFQVSSLLRHQTTH), 386-408 (FECSECGKGFSLNSALNIHQKIH), 414-436 (HKCSECGKAFTQKSTLRMHQRIH), 442-464 (YICTQCGQAFIQKAHLIAHQRIH), 470-492 (YECSDCGKSFPSKSQLQMHKRIH), 498-520 (YICTECGKAFTNRSNLNTHQKSH), 526-548 (YICAECGKAFTDRSNFNKHQTIH), 554-576 (YVCADCGRAFIQKSELITHQRIH), 582-604 (YKCPDCEKSFSKKPHLKVHQRIH), 610-632 (YICAECGKAFTDRSNFNKHQTIH), and 638-660 (YKCSDCGKGFTQKSVLSMHRNIH).

Belongs to the krueppel C2H2-type zinc-finger protein family.

Its subcellular location is the nucleus. May be involved in transcriptional regulation. This chain is Zinc finger protein 81 (ZNF81), found in Homo sapiens (Human).